Here is a 187-residue protein sequence, read N- to C-terminus: MLYNINELKVGLKVIQNKEPYVIIKNECIKPGKGQSFNRVRFKQIKSGKILEKTLKPGDLVESANIVETELIYVYRDRDLWFFMNRDSFDQISVHFDILGKSVKWMVEQLVYVVVFWDNNPILVIPPEFIKLKIIKTNLITKNISTASGNKLAVVSTGAVVKVPFFIQSGELIKVNTHSGSYISRIK.

At K33 the chain carries N6-(3,6-diaminohexanoyl)-5-hydroxylysine.

The protein belongs to the elongation factor P family. May be beta-lysylated on the epsilon-amino group of Lys-33 by the combined action of EpmA and EpmB, and then hydroxylated on the C5 position of the same residue by EpmC (if this protein is present). Lysylation is critical for the stimulatory effect of EF-P on peptide-bond formation. The lysylation moiety may extend toward the peptidyltransferase center and stabilize the terminal 3-CCA end of the tRNA. Hydroxylation of the C5 position on Lys-33 may allow additional potential stabilizing hydrogen-bond interactions with the P-tRNA.

It is found in the cytoplasm. It participates in protein biosynthesis; polypeptide chain elongation. Involved in peptide bond synthesis. Alleviates ribosome stalling that occurs when 3 or more consecutive Pro residues or the sequence PPG is present in a protein, possibly by augmenting the peptidyl transferase activity of the ribosome. Modification of Lys-33 is required for alleviation. In Blochmanniella floridana, this protein is Elongation factor P.